The primary structure comprises 128 residues: NADH-quinone oxidoreductase subunit A (128 aa).

The next 3 helical transmembrane spans lie at 12 to 32 (FAIF…LSFL), 66 to 86 (FYLI…LYAW), and 96 to 116 (LGFY…VYLV).

This sequence belongs to the complex I subunit 3 family. NDH-1 is composed of 14 different subunits. Subunits NuoA, H, J, K, L, M, N constitute the membrane sector of the complex.

Its subcellular location is the cell membrane. The catalysed reaction is a quinone + NADH + 5 H(+)(in) = a quinol + NAD(+) + 4 H(+)(out). NDH-1 shuttles electrons from NADH, via FMN and iron-sulfur (Fe-S) centers, to quinones in the respiratory chain. The immediate electron acceptor for the enzyme in this species is believed to be ubiquinone. Couples the redox reaction to proton translocation (for every two electrons transferred, four hydrogen ions are translocated across the cytoplasmic membrane), and thus conserves the redox energy in a proton gradient. In Baumannia cicadellinicola subsp. Homalodisca coagulata, this protein is NADH-quinone oxidoreductase subunit A.